The primary structure comprises 200 residues: NAD(P)H dehydrogenase (quinone) (200 aa).

The Flavodoxin-like domain maps to 4–191 (VLVLYYSSYG…GGARYQGALV (188 aa)). FMN contacts are provided by residues 10 to 15 (SSYGHI) and 79 to 81 (TRF). NAD(+) is bound at residue Tyr12. Trp99 is a binding site for substrate. FMN contacts are provided by residues 114-120 (STASQHG) and His135.

The protein belongs to the WrbA family. It depends on FMN as a cofactor.

The enzyme catalyses a quinone + NADH + H(+) = a quinol + NAD(+). It carries out the reaction a quinone + NADPH + H(+) = a quinol + NADP(+). In Rhodospirillum centenum (strain ATCC 51521 / SW), this protein is NAD(P)H dehydrogenase (quinone).